The following is a 240-amino-acid chain: Proteasome subunit beta 1 (240 aa).

The propeptide at 1 to 46 is removed in mature form; by autocatalysis; the sequence is MRDMTPGPDLSGPQAADEFQSDPYAPEVGELPEQSAQDSEKVNKTG. Positions 1–48 are disordered; it reads MRDMTPGPDLSGPQAADEFQSDPYAPEVGELPEQSAQDSEKVNKTGTT. Thr47 acts as the Nucleophile in catalysis.

The protein belongs to the peptidase T1B family. As to quaternary structure, the 20S proteasome core is composed of 14 alpha and 14 beta subunits that assemble into four stacked heptameric rings, resulting in a barrel-shaped structure. The two inner rings, each composed of seven catalytic beta subunits, are sandwiched by two outer rings, each composed of seven alpha subunits. The catalytic chamber with the active sites is on the inside of the barrel. Has a gated structure, the ends of the cylinder being occluded by the N-termini of the alpha-subunits. Is capped at one or both ends by the proteasome regulatory ATPase, PAN.

It is found in the cytoplasm. It carries out the reaction Cleavage of peptide bonds with very broad specificity.. The formation of the proteasomal ATPase PAN-20S proteasome complex, via the docking of the C-termini of PAN into the intersubunit pockets in the alpha-rings, triggers opening of the gate for substrate entry. Interconversion between the open-gate and close-gate conformations leads to a dynamic regulation of the 20S proteasome proteolysis activity. In terms of biological role, component of the proteasome core, a large protease complex with broad specificity involved in protein degradation. This Haloarcula marismortui (strain ATCC 43049 / DSM 3752 / JCM 8966 / VKM B-1809) (Halobacterium marismortui) protein is Proteasome subunit beta 1.